The chain runs to 381 residues: Protein COS6 (381 aa).

Topologically, residues 1 to 42 (MKENELKNEKSVDVLSVKQLESQKTVLPQDLFRSSFTWFCYE) are cytoplasmic. A helical transmembrane segment spans residues 43 to 63 (IYKSLVFRIWMLLWLPLSVWW). Residues 64 to 69 (KLSNNW) lie on the Extracellular side of the membrane. Residues 70–90 (IYPLMVSLLVLFWGPVFVLVI) form a helical membrane-spanning segment. The Cytoplasmic segment spans residues 91–381 (FRLSRKRSLS…QLSCSEESLA (291 aa)).

It belongs to the DUP/COS family.

The protein resides in the membrane. In Saccharomyces cerevisiae (strain ATCC 204508 / S288c) (Baker's yeast), this protein is Protein COS6 (COS6).